A 518-amino-acid polypeptide reads, in one-letter code: Chromosomal replication initiator protein DnaA (518 aa).

Residues 1-72 are domain I, interacts with DnaA modulators; the sequence is MTLAEFWPLC…VREELAAGRS (72 aa). The segment at 72–180 is domain II; sequence SAFVFKPGEG…DAEEARYEQT (109 aa). The tract at residues 145–178 is disordered; the sequence is EPRQAAGSASRPESAAVAKARTDAQRDAEEARYE. Positions 164–177 are enriched in basic and acidic residues; that stretch reads ARTDAQRDAEEARY. The segment at 181 to 397 is domain III, AAA+ region; it reads NLSPDYTFDT…GAFNRVGASS (217 aa). The ATP site is built by G225, G227, K228, and T229. The segment at 398 to 518 is domain IV, binds dsDNA; sequence RFMNRPVIDI…YEKLLILIQN (121 aa).

The protein belongs to the DnaA family. In terms of assembly, oligomerizes as a right-handed, spiral filament on DNA at oriC.

Its subcellular location is the cytoplasm. Its function is as follows. Plays an essential role in the initiation and regulation of chromosomal replication. ATP-DnaA binds to the origin of replication (oriC) to initiate formation of the DNA replication initiation complex once per cell cycle. Binds the DnaA box (a 9 base pair repeat at the origin) and separates the double-stranded (ds)DNA. Forms a right-handed helical filament on oriC DNA; dsDNA binds to the exterior of the filament while single-stranded (ss)DNA is stabiized in the filament's interior. The ATP-DnaA-oriC complex binds and stabilizes one strand of the AT-rich DNA unwinding element (DUE), permitting loading of DNA polymerase. After initiation quickly degrades to an ADP-DnaA complex that is not apt for DNA replication. Binds acidic phospholipids. This chain is Chromosomal replication initiator protein DnaA, found in Neisseria meningitidis serogroup A / serotype 4A (strain DSM 15465 / Z2491).